The chain runs to 160 residues: MAPK regulated corepressor interacting protein 2 (160 aa).

M1 carries the N-acetylmethionine modification. Residues 1–22 form a disordered region; the sequence is MYTITKGPSKLVAQRRTGPTQQ. Position 35 is an omega-N-methylarginine (R35). Residues 43-64 are disordered; the sequence is LPAHLQPSAQTQGPWPLASSGP. S61 is modified (phosphoserine). R65 is modified (omega-N-methylarginine). S82 is subject to Phosphoserine.

It belongs to the MCRIP family. In terms of assembly, interacts with DDX6. Interacts with MCRIP1.

It is found in the cytoplasm. It localises to the stress granule. The protein resides in the nucleus. The sequence is that of MAPK regulated corepressor interacting protein 2 (Mcrip2) from Mus musculus (Mouse).